A 315-amino-acid chain; its full sequence is Aspartate carbamoyltransferase catalytic subunit (315 aa).

The carbamoyl phosphate site is built by R55 and T56. Residue K83 coordinates L-aspartate. Carbamoyl phosphate-binding residues include R105, H138, and Q141. R171 and R225 together coordinate L-aspartate. The carbamoyl phosphate site is built by G266 and P267.

This sequence belongs to the aspartate/ornithine carbamoyltransferase superfamily. ATCase family. As to quaternary structure, heterododecamer (2C3:3R2) of six catalytic PyrB chains organized as two trimers (C3), and six regulatory PyrI chains organized as three dimers (R2).

The enzyme catalyses carbamoyl phosphate + L-aspartate = N-carbamoyl-L-aspartate + phosphate + H(+). The protein operates within pyrimidine metabolism; UMP biosynthesis via de novo pathway; (S)-dihydroorotate from bicarbonate: step 2/3. Catalyzes the condensation of carbamoyl phosphate and aspartate to form carbamoyl aspartate and inorganic phosphate, the committed step in the de novo pyrimidine nucleotide biosynthesis pathway. In Mycolicibacterium gilvum (strain PYR-GCK) (Mycobacterium gilvum (strain PYR-GCK)), this protein is Aspartate carbamoyltransferase catalytic subunit.